Here is a 126-residue protein sequence, read N- to C-terminus: Holo-[acyl-carrier-protein] synthase (126 aa).

The Mg(2+) site is built by Asp9 and Glu58.

It belongs to the P-Pant transferase superfamily. AcpS family. Mg(2+) serves as cofactor.

The protein resides in the cytoplasm. It catalyses the reaction apo-[ACP] + CoA = holo-[ACP] + adenosine 3',5'-bisphosphate + H(+). Its function is as follows. Transfers the 4'-phosphopantetheine moiety from coenzyme A to a Ser of acyl-carrier-protein. The polypeptide is Holo-[acyl-carrier-protein] synthase (Salmonella choleraesuis (strain SC-B67)).